The following is a 213-amino-acid chain: Uridine kinase (213 aa).

ATP is bound at residue G13–S20.

Belongs to the uridine kinase family.

It is found in the cytoplasm. It carries out the reaction uridine + ATP = UMP + ADP + H(+). The enzyme catalyses cytidine + ATP = CMP + ADP + H(+). It functions in the pathway pyrimidine metabolism; CTP biosynthesis via salvage pathway; CTP from cytidine: step 1/3. Its pathway is pyrimidine metabolism; UMP biosynthesis via salvage pathway; UMP from uridine: step 1/1. The sequence is that of Uridine kinase from Histophilus somni (strain 129Pt) (Haemophilus somnus).